The chain runs to 718 residues: Phospholipid phosphatase-related protein type 3 (718 aa).

Helical transmembrane passes span 18–38 (LPCF…SLYF), 70–90 (LIPL…SIMV), and 133–153 (FVGV…VIQL). Asn169 is a glycosylation site (N-linked (GlcNAc...) asparagine). Helical transmembrane passes span 207–227 (HATL…SVIS), 233–253 (LKPI…LTQI), and 263–283 (VYAG…HAVG). The tract at residues 313–347 (SVYQQNKSVSTDELGPPGRLEGAPRPVAREKTSLG) is disordered. Over residues 314–323 (VYQQNKSVST) the composition is skewed to polar residues. N-linked (GlcNAc...) asparagine glycosylation is present at Asn318. 2 positions are modified to phosphoserine: Ser322 and Ser353. Thr376 carries the phosphothreonine modification. A disordered region spans residues 416–488 (LEGRGLGLPD…GPRVILPPRA (73 aa)). Position 428 is a phosphoserine (Ser428). Residues 439 to 462 (MAEEEEEEEDEEEEEEEEEEEDEG) show a composition bias toward acidic residues. Ser508 is modified (phosphoserine). A compositionally biased stretch (low complexity) spans 545 to 571 (APGAPGPKAAETASSSSASSDSSQYRS). The segment at 545–577 (APGAPGPKAAETASSSSASSDSSQYRSPSDRDS) is disordered. Phosphoserine is present on Ser641. Low complexity predominate over residues 664–680 (GEGLPPLGAADGALGPG). The disordered stretch occupies residues 664–702 (GEGLPPLGAADGALGPGSRESTLRRHAGGLGLAEREAEA).

It belongs to the PA-phosphatase related phosphoesterase family.

It localises to the membrane. The polypeptide is Phospholipid phosphatase-related protein type 3 (Homo sapiens (Human)).